The following is a 916-amino-acid chain: MESGQPARRIAMAPLLEYERQLVLELLDTDGLVVCARGLGADRLLYHFLQLHCHPACLVLVLNTQPAEEEYFINQLKIEGVEHLPRRVTNEITSNSRYEVYTQGGVIFATSRILVVDFLTDRIPSDLITGILVYRAHRIIESCQEAFILRLFRQKNKRGFIKAFTDNAVAFDTGFCHVERVMRNLFVRKLYLWPRFHVAVNSFLEQHKPEVVEIHVSMTPTMLAIQTAILDILNACLKELKCHNPSLEVEDLSLENAIGKPFDKTIRHYLDPLWHQLGAKTKSLVQDLKILRTLLQYLSQYDCVTFLNLLESLRATEKAFGQNSGWLFLDSSTSMFINARARVYHLPDAKMSKKEKISEKMEIKEGEETKKELVLESNPKWEALTEVLKEIEAENKESEALGGPGQVLICASDDRTCSQLRDYITLGAEAFLLRLYRKTFEKDSKAEEVWMKFRKEDSSKRIRKSHKRPKDPQNKERASTKERTLKKKKRKLTLTQMVGKPEELEEEGDVEEGYRREISSSPESCPEEIKHEEFDVNLSSDAAFGILKEPLTIIHPLLGCSDPYALTRVLHEVEPRYVVLYDAELTFVRQLEIYRASRPGKPLRVYFLIYGGSTEEQRYLTALRKEKEAFEKLIREKASMVVPEEREGRDETNLDLVRGTASADVSTDTRKAGGQEQNGTQQSIVVDMREFRSELPSLIHRRGIDIEPVTLEVGDYILTPEMCVERKSISDLIGSLNNGRLYSQCISMSRYYKRPVLLIEFDPSKPFSLTSRGALFQEISSNDISSKLTLLTLHFPRLRILWCPSPHATAELFEELKQSKPQPDAATALAITADSETLPESEKYNPGPQDFLLKMPGVNAKNCRSLMHHVKNIAELAALSQDELTSILGNAANAKQLYDFIHTSFAEVVSKGKGKK.

The helicase-like stretch occupies residues 1–457 (MESGQPARRI…EVWMKFRKED (457 aa)). Leucine-zipper stretches follow at residues 233–254 (LNAC…DLSL) and 270–298 (LDPL…LQYL). Lysine 289 carries the N6-acetyllysine modification. The interval 460–487 (KRIRKSHKRPKDPQNKERASTKERTLKK) is disordered. A compositionally biased stretch (basic and acidic residues) spans 470–483 (KDPQNKERASTKER). The short motif at 486-491 (KKKKRK) is the Nuclear localization signal element. A Glycyl lysine isopeptide (Lys-Gly) (interchain with G-Cter in SUMO2) cross-link involves residue lysine 500. 2 disordered regions span residues 502-526 (EELE…ESCP) and 660-679 (TASA…EQNG). The residue at position 521 (serine 521) is a Phosphoserine. The interval 658 to 813 (RGTASADVST…PSPHATAELF (156 aa)) is nuclease. One can recognise an ERCC4 domain in the interval 683–763 (SIVVDMREFR…RPVLLIEFDP (81 aa)). Serine 764 carries the post-translational modification Phosphoserine. The segment at 837–905 (TLPESEKYNP…QLYDFIHTSF (69 aa)) is hhH2, dimerization with ERCC1. Lysine 911 is modified (N6-acetyllysine).

The protein belongs to the XPF family. In terms of assembly, heterodimer composed of ERCC1 and ERCC4/XPF. Interacts with SLX4/BTBD12; this interaction is direct and links the ERCC1-ERCC4/XPF complex to SLX4, which may coordinate the action of the structure-specific endonuclease during DNA repair. Requires Mg(2+) as cofactor. In terms of processing, acetylation at Lys-911 by KAT5 promotes interaction with ERCC1 by disrupting a salt bridge between Glu-907 and Lys-911, thereby exposing a second binding site for ERCC1. Deacetylated by SIRT1.

The protein localises to the nucleus. It localises to the chromosome. In terms of biological role, catalytic component of a structure-specific DNA repair endonuclease responsible for the 5-prime incision during DNA repair, and which is essential for nucleotide excision repair (NER) and interstrand cross-link (ICL) repair. In Homo sapiens (Human), this protein is DNA repair endonuclease XPF.